The sequence spans 256 residues: MREETYYSVRMRASRNAPHEQGGKHISGGERLITYSGLQEAVDGLLHKGFSHSRGIPDFMQIQLESINEPIETIRPLPVAFHQSDTPEKGQAIARKLLQKAGIPPHMIEKAYENIAEYAEARGAVLFDIRAGERIDGRGNRGVRVSRMDWPSHDFQKWAFTHNMPENSRIKEAHAIAAKVCAHPGIIAELCWSDDPDYITGYVAAKKLGYQRIAKMKNAGDESGCRIFFTDGSIDTESCIHFLEKQPVFIQREENI.

The protein belongs to the BioW family. In terms of assembly, homodimer. Mg(2+) serves as cofactor.

It catalyses the reaction heptanedioate + ATP + CoA = 6-carboxyhexanoyl-CoA + AMP + diphosphate. It participates in metabolic intermediate metabolism; pimeloyl-CoA biosynthesis; pimeloyl-CoA from pimelate: step 1/1. Catalyzes the transformation of pimelate into pimeloyl-CoA with concomitant hydrolysis of ATP to AMP. This chain is 6-carboxyhexanoate--CoA ligase, found in Bacillus velezensis (strain DSM 23117 / BGSC 10A6 / LMG 26770 / FZB42) (Bacillus amyloliquefaciens subsp. plantarum).